The primary structure comprises 672 residues: tRNA 5-methylaminomethyl-2-thiouridine biosynthesis bifunctional protein MnmC (672 aa).

Residues 1-241 (MHKVQFADVH…KRECLQGVKA (241 aa)) form a tRNA (mnm(5)s(2)U34)-methyltransferase region. An FAD-dependent cmnm(5)s(2)U34 oxidoreductase region spans residues 269-672 (IGGGIASVFS…LLKGSQVKQG (404 aa)).

The protein in the N-terminal section; belongs to the methyltransferase superfamily. tRNA (mnm(5)s(2)U34)-methyltransferase family. In the C-terminal section; belongs to the DAO family. It depends on FAD as a cofactor.

Its subcellular location is the cytoplasm. The catalysed reaction is 5-aminomethyl-2-thiouridine(34) in tRNA + S-adenosyl-L-methionine = 5-methylaminomethyl-2-thiouridine(34) in tRNA + S-adenosyl-L-homocysteine + H(+). Functionally, catalyzes the last two steps in the biosynthesis of 5-methylaminomethyl-2-thiouridine (mnm(5)s(2)U) at the wobble position (U34) in tRNA. Catalyzes the FAD-dependent demodification of cmnm(5)s(2)U34 to nm(5)s(2)U34, followed by the transfer of a methyl group from S-adenosyl-L-methionine to nm(5)s(2)U34, to form mnm(5)s(2)U34. The protein is tRNA 5-methylaminomethyl-2-thiouridine biosynthesis bifunctional protein MnmC of Pasteurella multocida (strain Pm70).